We begin with the raw amino-acid sequence, 231 residues long: Large ribosomal subunit protein uL1 (231 aa).

It belongs to the universal ribosomal protein uL1 family. As to quaternary structure, part of the 50S ribosomal subunit.

In terms of biological role, binds directly to 23S rRNA. The L1 stalk is quite mobile in the ribosome, and is involved in E site tRNA release. Protein L1 is also a translational repressor protein, it controls the translation of the L11 operon by binding to its mRNA. In Macrococcus caseolyticus (strain JCSC5402) (Macrococcoides caseolyticum), this protein is Large ribosomal subunit protein uL1.